Here is a 240-residue protein sequence, read N- to C-terminus: Large ribosomal subunit protein uL2 (240 aa).

The segment covering 1–11 has biased composition (polar residues); that stretch reads MGKRLISQNRG. Disordered regions lie at residues 1 to 31 and 206 to 240; these read MGKRLISQNRGRGTPKYRSPSHKRKGAVKYR and GGGRHQHLGKPSSVSRHTSPGRKVGHIASRRTGRK. Basic residues-rich tracts occupy residues 13–28 and 224–240; these read GTPKYRSPSHKRKGAV and SPGRKVGHIASRRTGRK.

This sequence belongs to the universal ribosomal protein uL2 family. As to quaternary structure, part of the 50S ribosomal subunit. Forms a bridge to the 30S subunit in the 70S ribosome.

Functionally, one of the primary rRNA binding proteins. Required for association of the 30S and 50S subunits to form the 70S ribosome, for tRNA binding and peptide bond formation. It has been suggested to have peptidyltransferase activity; this is somewhat controversial. Makes several contacts with the 16S rRNA in the 70S ribosome. This chain is Large ribosomal subunit protein uL2, found in Methanococcus maripaludis (strain C6 / ATCC BAA-1332).